The primary structure comprises 223 residues: Voltage-dependent calcium channel gamma-1 subunit (223 aa).

The Cytoplasmic portion of the chain corresponds to 1–10 (MSQTKTAKVR). The helical transmembrane segment at 11–29 (VTLFFILVGGVLAMVAVVT) threads the bilayer. Residues 30 to 109 (DHWAVLSPHL…TQKEYSISAA (80 aa)) lie on the Extracellular side of the membrane. N-linked (GlcNAc...) asparagine glycosylation is found at Asn-43 and Asn-80. Cysteines 57 and 81 form a disulfide. The chain crosses the membrane as a helical span at residues 110 to 130 (AIAIFSLGFIIVGSICAFLSF). Over 131 to 135 (GNKRD) the chain is Cytoplasmic. A helical membrane pass occupies residues 136-156 (YLLRPASMFYAFAGLCLIVSV). Residues 157–180 (EVMRQSVKRMIDSEDTVWIEHYYS) lie on the Extracellular side of the membrane. The helical transmembrane segment at 181-205 (WSFACACAAFILLFLGGLFLLLFSL) threads the bilayer. Residues 206–223 (PRMPQNPWESCMDAEPEH) lie on the Cytoplasmic side of the membrane.

Belongs to the PMP-22/EMP/MP20 family. CACNG subfamily. As to quaternary structure, component of a calcium channel complex consisting of a pore-forming alpha subunit (CACNA1S) and the ancillary subunits CACNB1 or CACNB2, CACNG1 and CACNA2D1. The channel complex contains alpha, beta, gamma and delta subunits in a 1:1:1:1 ratio, i.e. it contains either CACNB1 or CACNB2. In terms of processing, N-glycosylated. As to expression, detected in skeletal muscle (at protein level).

It localises to the cell membrane. It is found in the sarcolemma. In terms of biological role, regulatory subunit of the voltage-gated calcium channel that gives rise to L-type calcium currents in skeletal muscle. Regulates channel inactivation kinetics. This Mus musculus (Mouse) protein is Voltage-dependent calcium channel gamma-1 subunit (Cacng1).